We begin with the raw amino-acid sequence, 386 residues long: Histidinol-phosphate aminotransferase (386 aa).

Positions 1-11 (MMVRKSTASNR) are enriched in polar residues. The tract at residues 1–22 (MMVRKSTASNRRLQDKGDEEPV) is disordered. At K248 the chain carries N6-(pyridoxal phosphate)lysine.

This sequence belongs to the class-II pyridoxal-phosphate-dependent aminotransferase family. Histidinol-phosphate aminotransferase subfamily. As to quaternary structure, homodimer. It depends on pyridoxal 5'-phosphate as a cofactor.

The catalysed reaction is L-histidinol phosphate + 2-oxoglutarate = 3-(imidazol-4-yl)-2-oxopropyl phosphate + L-glutamate. It participates in amino-acid biosynthesis; L-histidine biosynthesis; L-histidine from 5-phospho-alpha-D-ribose 1-diphosphate: step 7/9. This is Histidinol-phosphate aminotransferase from Moorella thermoacetica (strain ATCC 39073 / JCM 9320).